Consider the following 286-residue polypeptide: Aminoglycoside N(3)-acetyltransferase III (286 aa).

It belongs to the antibiotic N-acetyltransferase family.

It carries out the reaction a 2-deoxystreptamine antibiotic + acetyl-CoA = an N(3)-acetyl-2-deoxystreptamine antibiotic + CoA + H(+). Resistance to antibiotics containing the 2-deoxy-streptamine ring including gentamicin, kanamycin, tobramycin, neomycin and apramycin. The chain is Aminoglycoside N(3)-acetyltransferase III (aacC3) from Salmonella sp.